The primary structure comprises 503 residues: Aspartyl/glutamyl-tRNA(Asn/Gln) amidotransferase subunit B (503 aa).

This sequence belongs to the GatB/GatE family. GatB subfamily. Heterotrimer of A, B and C subunits.

The catalysed reaction is L-glutamyl-tRNA(Gln) + L-glutamine + ATP + H2O = L-glutaminyl-tRNA(Gln) + L-glutamate + ADP + phosphate + H(+). It carries out the reaction L-aspartyl-tRNA(Asn) + L-glutamine + ATP + H2O = L-asparaginyl-tRNA(Asn) + L-glutamate + ADP + phosphate + 2 H(+). Functionally, allows the formation of correctly charged Asn-tRNA(Asn) or Gln-tRNA(Gln) through the transamidation of misacylated Asp-tRNA(Asn) or Glu-tRNA(Gln) in organisms which lack either or both of asparaginyl-tRNA or glutaminyl-tRNA synthetases. The reaction takes place in the presence of glutamine and ATP through an activated phospho-Asp-tRNA(Asn) or phospho-Glu-tRNA(Gln). The polypeptide is Aspartyl/glutamyl-tRNA(Asn/Gln) amidotransferase subunit B (Ruegeria pomeroyi (strain ATCC 700808 / DSM 15171 / DSS-3) (Silicibacter pomeroyi)).